A 461-amino-acid polypeptide reads, in one-letter code: Bifunctional protein GlmU (461 aa).

A pyrophosphorylase region spans residues 1-229 (MNKYVVILAA…FSESLGVNDR (229 aa)). Residues 8–11 (LAAG), K22, Q72, and 77–78 (GT) each bind UDP-N-acetyl-alpha-D-glucosamine. Residue D102 participates in Mg(2+) binding. UDP-N-acetyl-alpha-D-glucosamine is bound by residues G139, E154, N169, and N227. N227 is a Mg(2+) binding site. The interval 230 to 250 (IALAQATKIMQRRINEEHMRN) is linker. The N-acetyltransferase stretch occupies residues 251 to 461 (GVSFIDPDTA…LPLAKDKEWE (211 aa)). UDP-N-acetyl-alpha-D-glucosamine-binding residues include R332 and K350. The active-site Proton acceptor is H362. Y365 and N376 together coordinate UDP-N-acetyl-alpha-D-glucosamine. Acetyl-CoA is bound by residues 385 to 386 (NY), A422, and R439.

It in the N-terminal section; belongs to the N-acetylglucosamine-1-phosphate uridyltransferase family. This sequence in the C-terminal section; belongs to the transferase hexapeptide repeat family. In terms of assembly, homotrimer. Mg(2+) serves as cofactor.

It localises to the cytoplasm. The catalysed reaction is alpha-D-glucosamine 1-phosphate + acetyl-CoA = N-acetyl-alpha-D-glucosamine 1-phosphate + CoA + H(+). It carries out the reaction N-acetyl-alpha-D-glucosamine 1-phosphate + UTP + H(+) = UDP-N-acetyl-alpha-D-glucosamine + diphosphate. It functions in the pathway nucleotide-sugar biosynthesis; UDP-N-acetyl-alpha-D-glucosamine biosynthesis; N-acetyl-alpha-D-glucosamine 1-phosphate from alpha-D-glucosamine 6-phosphate (route II): step 2/2. Its pathway is nucleotide-sugar biosynthesis; UDP-N-acetyl-alpha-D-glucosamine biosynthesis; UDP-N-acetyl-alpha-D-glucosamine from N-acetyl-alpha-D-glucosamine 1-phosphate: step 1/1. The protein operates within bacterial outer membrane biogenesis; LPS lipid A biosynthesis. Functionally, catalyzes the last two sequential reactions in the de novo biosynthetic pathway for UDP-N-acetylglucosamine (UDP-GlcNAc). The C-terminal domain catalyzes the transfer of acetyl group from acetyl coenzyme A to glucosamine-1-phosphate (GlcN-1-P) to produce N-acetylglucosamine-1-phosphate (GlcNAc-1-P), which is converted into UDP-GlcNAc by the transfer of uridine 5-monophosphate (from uridine 5-triphosphate), a reaction catalyzed by the N-terminal domain. This chain is Bifunctional protein GlmU, found in Lactobacillus johnsonii (strain CNCM I-12250 / La1 / NCC 533).